Here is a 212-residue protein sequence, read N- to C-terminus: Protein GrpE (212 aa).

Residues 1–68 form a disordered region; the sequence is MAETSNNKTS…ELESAKKEIE (68 aa). Positions 9–30 are enriched in basic and acidic residues; the sequence is TSEEAKANEKKSQSETLEESKL. The segment covering 40–60 has biased composition (low complexity); that stretch reads ETTQTESMETAETETSLQTEL.

It belongs to the GrpE family. In terms of assembly, homodimer.

Its subcellular location is the cytoplasm. Its function is as follows. Participates actively in the response to hyperosmotic and heat shock by preventing the aggregation of stress-denatured proteins, in association with DnaK and GrpE. It is the nucleotide exchange factor for DnaK and may function as a thermosensor. Unfolded proteins bind initially to DnaJ; upon interaction with the DnaJ-bound protein, DnaK hydrolyzes its bound ATP, resulting in the formation of a stable complex. GrpE releases ADP from DnaK; ATP binding to DnaK triggers the release of the substrate protein, thus completing the reaction cycle. Several rounds of ATP-dependent interactions between DnaJ, DnaK and GrpE are required for fully efficient folding. The polypeptide is Protein GrpE (Leptospira interrogans serogroup Icterohaemorrhagiae serovar copenhageni (strain Fiocruz L1-130)).